The following is a 568-amino-acid chain: SLAIN motif-containing protein 1 (568 aa).

Disordered stretches follow at residues 1-22 (MMAEQVKCASAGVSSGAGSGPV), 59-92 (LLLLPPPPPAAPPPAGLQPLGPRSPPAATATAAA), 139-162 (GGGPEPGGAGTPPGAAAAPPSPPP), 235-256 (YTSRGSPLSPQSSIDSELSTSE), and 291-403 (STSA…LRRS). Positions 21 to 56 (PVVNAELEVKKLQELVRKLEKQNEQLRSRAASAAAA) form a coiled coil. A compositionally biased stretch (pro residues) spans 62 to 74 (LPPPPPAAPPPAG). Residues 75-92 (LQPLGPRSPPAATATAAA) show a composition bias toward low complexity. Gly residues predominate over residues 139–149 (GGGPEPGGAGT). Positions 235–245 (YTSRGSPLSPQ) are enriched in polar residues. The residue at position 243 (serine 243) is a Phosphoserine. Low complexity-rich tracts occupy residues 246–255 (SSIDSELSTS) and 291–307 (STSASVSRHSSSVSLSS). A compositionally biased stretch (acidic residues) spans 316-329 (QEYDQYSLEDEEEF). Positions 366-384 (SSQYFPSNNYQQQQYYSPQ) are enriched in low complexity. Residues 385-395 (AQTPDQQPNRT) are compositionally biased toward polar residues. Asymmetric dimethylarginine occurs at positions 471 and 543.

This sequence belongs to the SLAIN motif-containing family. As to quaternary structure, interacts with MAPRE1, MAPRE2, MAPRE3 and CKAP5. Interacts with ZDHHC17 (via ANK repeats). In terms of tissue distribution, expressed in embryonic stem cells. Expressed in brain.

It is found in the cytoplasm. It localises to the cytoskeleton. Microtubule plus-end tracking protein that might be involved in the regulation of cytoplasmic microtubule dynamics, microtubule organization and microtubule elongation. This is SLAIN motif-containing protein 1 (SLAIN1) from Homo sapiens (Human).